Reading from the N-terminus, the 387-residue chain is Eukaryotic translation initiation factor 3 subunit M (387 aa).

The PCI domain maps to 181–340 (LSSKVMIELL…RKVHISSTMH (160 aa)).

It belongs to the eIF-3 subunit M family. As to quaternary structure, component of the eukaryotic translation initiation factor 3 (eIF-3) complex. The eIF-3 complex interacts with pix.

The protein resides in the cytoplasm. It is found in the golgi apparatus. Component of the eukaryotic translation initiation factor 3 (eIF-3) complex, which is involved in protein synthesis of a specialized repertoire of mRNAs and, together with other initiation factors, stimulates binding of mRNA and methionyl-tRNAi to the 40S ribosome. The eIF-3 complex specifically targets and initiates translation of a subset of mRNAs involved in cell proliferation. This chain is Eukaryotic translation initiation factor 3 subunit M, found in Drosophila mojavensis (Fruit fly).